We begin with the raw amino-acid sequence, 310 residues long: Aspartate carbamoyltransferase catalytic subunit (310 aa).

Carbamoyl phosphate-binding residues include R58 and T59. Residue K86 coordinates L-aspartate. 3 residues coordinate carbamoyl phosphate: R108, H136, and Q139. Positions 169 and 224 each coordinate L-aspartate. Residues G265 and P266 each contribute to the carbamoyl phosphate site.

The protein belongs to the aspartate/ornithine carbamoyltransferase superfamily. ATCase family. As to quaternary structure, heterododecamer (2C3:3R2) of six catalytic PyrB chains organized as two trimers (C3), and six regulatory PyrI chains organized as three dimers (R2).

The catalysed reaction is carbamoyl phosphate + L-aspartate = N-carbamoyl-L-aspartate + phosphate + H(+). The protein operates within pyrimidine metabolism; UMP biosynthesis via de novo pathway; (S)-dihydroorotate from bicarbonate: step 2/3. Its function is as follows. Catalyzes the condensation of carbamoyl phosphate and aspartate to form carbamoyl aspartate and inorganic phosphate, the committed step in the de novo pyrimidine nucleotide biosynthesis pathway. In Trichlorobacter lovleyi (strain ATCC BAA-1151 / DSM 17278 / SZ) (Geobacter lovleyi), this protein is Aspartate carbamoyltransferase catalytic subunit.